We begin with the raw amino-acid sequence, 575 residues long: MSHAAEPARDGVEASAEGPRAVFVLLEERRPADSAQLLSLNSLLPESGIVADIELENVLDPDSFYELKSQPLPLRSSLPISLQATPATPATLSASSSAGGSRTPAMSSSSSSRVLLRQQLMRAQAQEQERRERREQAAAAPFPSPAPASPAISVVGVSAGGHTLSRPPPAQVPREVLKVQTHLENPTRYHLQQARRQQVKQYLSTTLGPKLASQALTPPPGPASAQPLPAPEAAHTTGPTGSAPNSPMALLTIGSSSEKEIDDVIDEIISLESSYNDEMLSYLPGGTTGLQLPSTLPVSGNLLDVYSSQGVATPAITVSNSCPAELPNIKREISETEAKALLKERQKKDNHNLIERRRRFNINDRIKELGTLIPKSSDPEMRWNKGTILKASVDYIRKLQKEQQRSKDLESRQRSLEQANRSLQLRIQELELQAQIHGLPVPPTPGLLSLATTSASDSLKPEQLDIEEEGRPGAATFHVGGGPAQNAPHQQPPAPPSDALLDLHFPSDHLGDLGDPFHLGLEDILMEEEEGVVGGLSGGALSPLRAASDPLLSSVSPAVSKASSRRSSFSMEEES.

Phosphoserine; by MTOR is present on S47. The segment covering 90 to 126 (ATLSASSSAGGSRTPAMSSSSSSRVLLRQQLMRAQAQ) has biased composition (low complexity). Positions 90–153 (ATLSASSSAG…SPAPASPAIS (64 aa)) are disordered. A compositionally biased stretch (basic and acidic residues) spans 127 to 136 (EQERRERREQ). R188 is subject to Asymmetric dimethylarginine. A disordered region spans residues 211 to 246 (LASQALTPPPGPASAQPLPAPEAAHTTGPTGSAPNS). The strong transcription activation domain stretch occupies residues 260-271 (EIDDVIDEIISL). The residue at position 321 (S321) is a Phosphoserine; by MTOR. K339 is covalently cross-linked (Glycyl lysine isopeptide (Lys-Gly) (interchain with G-Cter in SUMO2)). One can recognise a bHLH domain in the interval 346 to 399 (QKKDNHNLIERRRRFNINDRIKELGTLIPKSSDPEMRWNKGTILKASVDYIRKL). Residues 356–359 (RRRR) carry the Nuclear localization signal motif. A leucine-zipper region spans residues 409 to 430 (LESRQRSLEQANRSLQLRIQEL). 2 disordered regions span residues 473 to 498 (GAATFHVGGGPAQNAPHQQPPAPPSD) and 534 to 575 (GGLS…EEES). Residues 539–575 (GALSPLRAASDPLLSSVSPAVSKASSRRSSFSMEEES) are compositionally biased toward low complexity. Residues S542, S548, S554, S556, S560, and S568 each carry the phosphoserine modification.

This sequence belongs to the MiT/TFE family. In terms of assembly, homodimer and heterodimer; with TFEB or MITF. Interacts with RRAGC/RagC GDP-bound and RRAGD/RagD GDP-bound; promoting its recruitment to lysosomal membrane in the presence of nutrients. Interacts with TSC22D1; the interaction is enhanced in the presence of TGF-beta. Post-translationally, sumoylated; does not affect dimerization with MITF. Phosphorylation ar Ser-47 and Ser-321 by MTOR via non-canonical mTORC1 pathway regulates its stability and subcellular location, respectively. When nutrients are present, phosphorylation by MTOR at Ser-47 promotes ubiquitination by the SCF(BTRC) complex, followed by degradation. When nutrients are present, phosphorylation by MTOR at Ser-321 also promotes association with 14-3-3/YWHA adapters and retention in the cytosol. Phosphorylation at Ser-47 plays a more critical role than phosphorylation at Ser-321 for TFE3 inactivation. Inhibition of mTORC1, starvation and lysosomal disruption, promotes dephosphorylation and transcription factor activity. In terms of processing, ubiquitinated by the SCF(BTRC) and SCF(FBXW11) complexes following phosphorylation at Ser-47 by MTOR, leading to its degradation by the proteasome. In terms of tissue distribution, ubiquitous in fetal and adult tissues.

It is found in the cytoplasm. It localises to the cytosol. The protein localises to the nucleus. Its subcellular location is the lysosome membrane. In terms of biological role, transcription factor that acts as a master regulator of lysosomal biogenesis and immune response. Specifically recognizes and binds E-box sequences (5'-CANNTG-3'); efficient DNA-binding requires dimerization with itself or with another MiT/TFE family member such as TFEB or MITF. Involved in the cellular response to amino acid availability by acting downstream of MTOR: in the presence of nutrients, TFE3 phosphorylation by MTOR promotes its inactivation. Upon starvation or lysosomal stress, inhibition of MTOR induces TFE3 dephosphorylation, resulting in transcription factor activity. Specifically recognizes and binds the CLEAR-box sequence (5'-GTCACGTGAC-3') present in the regulatory region of many lysosomal genes, leading to activate their expression, thereby playing a central role in expression of lysosomal genes. Maintains the pluripotent state of embryonic stem cells by promoting the expression of genes such as ESRRB; mTOR-dependent TFE3 cytosolic retention and inactivation promotes exit from pluripotency. Required to maintain the naive pluripotent state of hematopoietic stem cell; mTOR-dependent cytoplasmic retention of TFE3 promotes the exit of hematopoietic stem cell from pluripotency. TFE3 activity is also involved in the inhibition of neuronal progenitor differentiation. Acts as a positive regulator of browning of adipose tissue by promoting expression of target genes; mTOR-dependent phosphorylation promotes cytoplasmic retention of TFE3 and inhibits browning of adipose tissue. In association with TFEB, activates the expression of CD40L in T-cells, thereby playing a role in T-cell-dependent antibody responses in activated CD4(+) T-cells and thymus-dependent humoral immunity. Specifically recognizes the MUE3 box, a subset of E-boxes, present in the immunoglobulin enhancer. It also binds very well to a USF/MLTF site. Promotes TGF-beta-induced transcription of COL1A2; via its interaction with TSC22D1 at E-boxes in the gene proximal promoter. May regulate lysosomal positioning in response to nutrient deprivation by promoting the expression of PIP4P1. The chain is Transcription factor E3 from Homo sapiens (Human).